The following is a 65-amino-acid chain: UPF0434 protein BBta_0300 (65 aa).

This sequence belongs to the UPF0434 family.

In Bradyrhizobium sp. (strain BTAi1 / ATCC BAA-1182), this protein is UPF0434 protein BBta_0300.